The following is a 167-amino-acid chain: Kininogen-1 (167 aa).

An N-terminal signal peptide occupies residues 1–23; that stretch reads MRLWFCLSFFIILCLEHFPGTLA.

This sequence belongs to the bradykinin-related peptide family. In terms of tissue distribution, expressed by the skin glands.

The protein localises to the secreted. Vasodilator. Bradykinin produces in vitro relaxation of rat arterial smooth muscle and constriction of intestinal smooth muscle. May target bradykinin receptors (BDKRB). The sequence is that of Kininogen-1 from Bombina orientalis (Oriental fire-bellied toad).